A 64-amino-acid chain; its full sequence is DNA-binding protein 7b (64 aa).

This sequence belongs to the 7 kDa DNA-binding/endoribonuclease P2 family. Monomer.

Its subcellular location is the cytoplasm. Functionally, can constrain negative DNA supercoils. May be involved in maintaining the integrity of the genome at high temperature. This is DNA-binding protein 7b from Saccharolobus islandicus (strain HVE10/4) (Sulfolobus islandicus).